We begin with the raw amino-acid sequence, 139 residues long: MKKGVLLNSEISAVISQLGHTDQITIGDAGLPIPSLAQRIDLALTQGIPSFISVLNVVTQEMQIEAAFLAEEIIGHNPLIHQLILTQIKELEKQQGNSITVDYISHNVLKEKTKHSRAVIRTGEHSPYANIILGAGVTF.

Catalysis depends on His20, which acts as the Proton donor. Substrate-binding positions include Asp28, His106, and 128 to 130; that span reads YAN.

The protein belongs to the RbsD / FucU family. RbsD subfamily. Homodecamer.

It is found in the cytoplasm. The catalysed reaction is beta-D-ribopyranose = beta-D-ribofuranose. It participates in carbohydrate metabolism; D-ribose degradation; D-ribose 5-phosphate from beta-D-ribopyranose: step 1/2. Its function is as follows. Catalyzes the interconversion of beta-pyran and beta-furan forms of D-ribose. The polypeptide is D-ribose pyranase (Photorhabdus laumondii subsp. laumondii (strain DSM 15139 / CIP 105565 / TT01) (Photorhabdus luminescens subsp. laumondii)).